The following is a 282-amino-acid chain: Epoxide hydrolase LasB (282 aa).

Residues 1–133 (MPAETVRKEV…TDSSWTARPA (133 aa)) form a lsd19A region. Tyr14 lines the substrate pocket. Asp38 (proton acceptor; for 5-exo epoxide-opening cyclization activity) is an active-site residue. Residues Glu65 and His146 each contribute to the substrate site. The segment at 134–282 (PDEERRKELA…TDVSLLDPAA (149 aa)) is lsd19B. The Proton acceptor; for 6-endo epoxide-opening cyclization activity role is filled by Asp170. Positions 177, 197, and 251 each coordinate substrate.

Epoxide hydrolase responsible for the double epoxide-opening cyclization of bisepoxyprelasalocid A to form lasalocid A, a polyether antibiotic. In vitro, accepts various substrate analogs differing in the left segment of lasalocid and epoxide stereochemistry to afford products with excellent regioselectivity. This Streptomyces lasalocidi (Streptomyces lasaliensis) protein is Epoxide hydrolase LasB (lsd19).